Reading from the N-terminus, the 275-residue chain is MYSDNSQRKLTKAVTLSTLKKMKADKEKITCLTSYDASFTNVMNVAGVETILVGDSLGMVIQGQDSTLPVTIEDMCYHTAAVKRGNTNAFILADMSFMSYSKPEQALDNAAKLMQAGANMVKLEGGSWLADTIKLLSQRGIPVCAHLGLTPQSVHKFGGYKVQGKSQDAADLLLQESLDLVAAGADILLYECIPTELGKTLTDAVPVPTIGIGAGHHTDGQVLVMHDMLGINLGHTPKFVKNFLTEGRNVTEAFEAYVKEVKDMTFPGPEHGFKS.

Asp55 and Asp94 together coordinate Mg(2+). Residues 55–56 (DS), Asp94, and Lys122 contribute to the 3-methyl-2-oxobutanoate site. Position 124 (Glu124) interacts with Mg(2+). Residue Glu191 is the Proton acceptor of the active site.

This sequence belongs to the PanB family. Homodecamer; pentamer of dimers. The cofactor is Mg(2+).

The protein resides in the cytoplasm. It carries out the reaction 3-methyl-2-oxobutanoate + (6R)-5,10-methylene-5,6,7,8-tetrahydrofolate + H2O = 2-dehydropantoate + (6S)-5,6,7,8-tetrahydrofolate. It participates in cofactor biosynthesis; (R)-pantothenate biosynthesis; (R)-pantoate from 3-methyl-2-oxobutanoate: step 1/2. In terms of biological role, catalyzes the reversible reaction in which hydroxymethyl group from 5,10-methylenetetrahydrofolate is transferred onto alpha-ketoisovalerate to form ketopantoate. The polypeptide is 3-methyl-2-oxobutanoate hydroxymethyltransferase (Marinomonas sp. (strain MWYL1)).